A 387-amino-acid polypeptide reads, in one-letter code: Eukaryotic translation initiation factor 3 subunit M (387 aa).

The PCI domain maps to 181 to 340 (LSSKVMIELL…RKVHISSTMH (160 aa)).

This sequence belongs to the eIF-3 subunit M family. In terms of assembly, component of the eukaryotic translation initiation factor 3 (eIF-3) complex. The eIF-3 complex interacts with pix.

The protein resides in the cytoplasm. Its subcellular location is the golgi apparatus. In terms of biological role, component of the eukaryotic translation initiation factor 3 (eIF-3) complex, which is involved in protein synthesis of a specialized repertoire of mRNAs and, together with other initiation factors, stimulates binding of mRNA and methionyl-tRNAi to the 40S ribosome. The eIF-3 complex specifically targets and initiates translation of a subset of mRNAs involved in cell proliferation. In Drosophila persimilis (Fruit fly), this protein is Eukaryotic translation initiation factor 3 subunit M.